The primary structure comprises 205 residues: DNA-directed RNA polymerase RPB5 homolog (205 aa).

This sequence belongs to the archaeal RpoH/eukaryotic RPB5 RNA polymerase subunit family. In terms of assembly, part of the viral DNA-directed RNA polymerase that consists of 8 polII-like subunits (RPB1, RPB2, RPB3, RPB5, RPB6, RPB7, RPB9, RPB10), a capping enzyme and a termination factor.

It is found in the host cytoplasm. Its subcellular location is the virion. In terms of biological role, component of the DNA-directed RNA polymerase (RNAP) that catalyzes the transcription in the cytoplasm of viral DNA into RNA using the four ribonucleoside triphosphates as substrates. In Ornithodoros (relapsing fever ticks), this protein is DNA-directed RNA polymerase RPB5 homolog.